The primary structure comprises 1429 residues: uncharacterized protein (1429 aa).

Disordered stretches follow at residues 1-76 (MEGE…SGIE) and 103-130 (PAGA…AGEK). A compositionally biased stretch (low complexity) spans 14-29 (SHSTSVVSERASSSGV). The span at 109-121 (SAQNANLISSKSE) shows a compositional bias: polar residues. 2 helical membrane passes run 197-217 (LTGQ…LSWI) and 225-245 (FFIL…CMIS). An SMP-LTD domain is found at 266–471 (DYETMSWFNT…WPNMFDYDLS (206 aa)). C2 domains are found at residues 462–584 (WPNM…GDIY) and 738–858 (TPVD…DRSA). The disordered stretch occupies residues 899 to 932 (NTDNSSKQSSENVQSATDPTTPAKDNSTSNAETS). The 118-residue stretch at 1060–1177 (TYMPVPMTLN…EPNVESQQSI (118 aa)) folds into the C2 3 domain. Positions 1280-1303 (EKNPSRSDLTTTQEASSSASVPPA) are disordered. Low complexity predominate over residues 1294-1303 (ASSSASVPPA).

It localises to the membrane. This is an uncharacterized protein from Schizosaccharomyces pombe (strain 972 / ATCC 24843) (Fission yeast).